The chain runs to 748 residues: Semaphorin-3B (748 aa).

The first 25 residues, 1-25, serve as a signal peptide directing secretion; sequence MGRAEAAAMIPGLALLWVAGLGDTA. The 483-residue stretch at 30-512 folds into the Sema domain; that stretch reads RLRLSFQELQ…SRSAVAQIAL (483 aa). An N-linked (GlcNAc...) asparagine glycan is attached at Asn-82. Cys-102 and Cys-113 are joined by a disulfide. Asn-124 carries N-linked (GlcNAc...) asparagine glycosylation. 5 cysteine pairs are disulfide-bonded: Cys-131/Cys-140, Cys-268/Cys-379, Cys-292/Cys-339, Cys-515/Cys-533, and Cys-643/Cys-709. The Ig-like C2-type domain occupies 561 to 659; it reads PSTLCSGDSS…FSQPLRRLVL (99 aa). The tract at residues 708-748 is disordered; that stretch reads MCRPQPGHHSVAADSRRKGRNRRMHVSELRAERGPRSAAHW. Positions 732-742 are enriched in basic and acidic residues; that stretch reads HVSELRAERGP.

Belongs to the semaphorin family.

It is found in the secreted. Inhibits axonal extension by providing local signals to specify territories inaccessible for growing axons. This chain is Semaphorin-3B (Sema3b), found in Mus musculus (Mouse).